The following is a 436-amino-acid chain: Glutamyl-tRNA reductase (436 aa).

Residues 49–52 (TCNR), Ser109, 114–116 (EPQ), and Gln120 contribute to the substrate site. Cys50 acts as the Nucleophile in catalysis. Position 189 to 194 (189 to 194 (GAGEMC)) interacts with NADP(+).

It belongs to the glutamyl-tRNA reductase family. In terms of assembly, homodimer.

It carries out the reaction (S)-4-amino-5-oxopentanoate + tRNA(Glu) + NADP(+) = L-glutamyl-tRNA(Glu) + NADPH + H(+). Its pathway is porphyrin-containing compound metabolism; protoporphyrin-IX biosynthesis; 5-aminolevulinate from L-glutamyl-tRNA(Glu): step 1/2. In terms of biological role, catalyzes the NADPH-dependent reduction of glutamyl-tRNA(Glu) to glutamate 1-semialdehyde (GSA). The protein is Glutamyl-tRNA reductase of Pelobacter propionicus (strain DSM 2379 / NBRC 103807 / OttBd1).